The sequence spans 80 residues: Protein CEBPZOS (80 aa).

A helical membrane pass occupies residues 15 to 31 (GVLAAELVGVAGAYCLF).

It localises to the mitochondrion membrane. This chain is Protein CEBPZOS, found in Mus musculus (Mouse).